The sequence spans 131 residues: MAEPDYIEDDNPELIRPQKLINPVKTSRNHQDLHRELLMNQKRGLAPQNKPELQKVMEKRRRDQVIKQKEEEAQKKKSDLEIELLKRQQKLEQLELEKQKLQEEQENAPEFVKVKGNLRRTGQEVAQAQES.

Ala-2 carries the N-acetylalanine modification. 2 disordered regions span residues 39–78 and 100–131; these read MNQK…KKKS and KLQE…AQES. Lys-50 carries the N6-acetyllysine modification. Positions 52–78 are enriched in basic and acidic residues; sequence ELQKVMEKRRRDQVIKQKEEEAQKKKS. The stretch at 61–112 forms a coiled coil; it reads RRDQVIKQKEEEAQKKKSDLEIELLKRQQKLEQLELEKQKLQEEQENAPEFV.

Belongs to the FAM107 family.

This Rattus norvegicus (Rat) protein is Protein FAM107B.